The sequence spans 457 residues: Adenylyltransferase and sulfurtransferase MOCS3 (457 aa).

A disordered region spans residues 40-60; that stretch reads ANGGGNGDGLADEGGERNTGT. Residue threonine 63 is modified to Phosphothreonine. Residues glycine 102, aspartate 123, 130–134, lysine 147, and 191–192 contribute to the ATP site; these read SNFHR and DN. The Zn(2+) site is built by cysteine 233 and cysteine 236. Cysteine 250 acts as the Glycyl thioester intermediate; for adenylyltransferase activity in catalysis. Zn(2+) is bound by residues cysteine 309 and cysteine 312. Residues 358–455 enclose the Rhodanese domain; it reads ESQPHLLFDV…WTRKVDPDFP (98 aa). The active-site Cysteine persulfide intermediate; for sulfurtransferase activity is the cysteine 414.

It in the N-terminal section; belongs to the HesA/MoeB/ThiF family. UBA4 subfamily. The cofactor is Zn(2+).

Its subcellular location is the cytoplasm. It localises to the cytosol. It catalyses the reaction [molybdopterin-synthase sulfur-carrier protein]-C-terminal Gly-Gly + ATP + H(+) = [molybdopterin-synthase sulfur-carrier protein]-C-terminal Gly-Gly-AMP + diphosphate. The catalysed reaction is [molybdopterin-synthase sulfur-carrier protein]-C-terminal Gly-Gly-AMP + S-sulfanyl-L-cysteinyl-[cysteine desulfurase] + AH2 = [molybdopterin-synthase sulfur-carrier protein]-C-terminal-Gly-aminoethanethioate + L-cysteinyl-[cysteine desulfurase] + A + AMP + 2 H(+). Its pathway is tRNA modification; 5-methoxycarbonylmethyl-2-thiouridine-tRNA biosynthesis. The protein operates within cofactor biosynthesis; molybdopterin biosynthesis. Functionally, plays a central role in 2-thiolation of mcm(5)S(2)U at tRNA wobble positions of cytosolic tRNA(Lys), tRNA(Glu) and tRNA(Gln). Also essential during biosynthesis of the molybdenum cofactor. Acts by mediating the C-terminal thiocarboxylation of sulfur carriers URM1 and MOCS2A. Its N-terminus first activates URM1 and MOCS2A as acyl-adenylates (-COAMP), then the persulfide sulfur on the catalytic cysteine is transferred to URM1 and MOCS2A to form thiocarboxylation (-COSH) of their C-terminus. The reaction probably involves hydrogen sulfide that is generated from the persulfide intermediate and that acts as a nucleophile towards URM1 and MOCS2A. Subsequently, a transient disulfide bond is formed. Does not use thiosulfate as sulfur donor; NFS1 probably acting as a sulfur donor for thiocarboxylation reactions. The polypeptide is Adenylyltransferase and sulfurtransferase MOCS3 (Drosophila willistoni (Fruit fly)).